Here is a 731-residue protein sequence, read N- to C-terminus: MSMFLLPVYNIPPAKGFLKKVQTRDCNFNIQLKIFCCLATNQVVSSLDFNQLDCIMGHESTFYTCRAVRRLLLGSNWYPFIDTLNESATGTRGPMYNGPGLIINNTDSTYKLTNICSNKYLPIVYSLETTDMPHEPLAYRAIYFPDLEQTPIDYMCMFKIICRYVTMSELEECYEYFLATVSPPFVNTCKKNYLRLVSALKTLPSTVLATPNPPDQLEFFKFSILSFMQEWSLNSLLNTTKKKIIAAVHSHPHIVIKLCSQNAFKEIKITDANFIEMQQTVNHVMPNFHAEITKRDPGSRPLKVSVLLPDGVKWVIYPPSLPIYRVTMCLASVAAVSSDTITSDKQDIRTASALVSIFRKINYAPKDKKKDMVLNSKVALDIFRNYIAQKYTEEDEFMTYRPIHRLGINNFKVNVFNTNMVINTKIFTHSVPWTYKSLMDIPRLTKNFVFKKYSVKEPSFTVSVFYCENMCNGAAININISGDLLTFLHAMGNMKCYMPIKNILPVSLSNWNSTLDLHGLENQSIVRTGRRDVFWTTNFPSAVSTKLGFNVSWFKAATATISKIYGTSLTSHVTKEVSPIISNNSARLSLLKNNLFSVLESRNRSQIQTLHKRMLECLVALCSFLRLDSHTVRRLAQKGMFDFSKKTISHAKNKHDCALLGYKKCNMIPKVLSFNKKTRLDEHGRNANFLAFISATGFHVPKIRAKLIKHVLRTLGLHWRRTYKHVYNTAQ.

It belongs to the herpesviridae UL87 family.

This chain is Gene 24 protein (24), found in Saimiri sciureus (Common squirrel monkey).